Here is a 322-residue protein sequence, read N- to C-terminus: Mas-related G-protein coupled receptor member X1 (322 aa).

Residues 1–31 are Extracellular-facing; it reads MDPTISTLDTELTPINGTEETLCYKQTLSLT. N-linked (GlcNAc...) asparagine glycosylation occurs at Asn16. The chain crosses the membrane as a helical span at residues 32–52; it reads VLTCIVSLVGLTGNAVVLWLL. Residues 53–67 lie on the Cytoplasmic side of the membrane; sequence GCRMRRNAFSIYILN. A helical transmembrane segment spans residues 68–88; sequence LAAADFLFLSGRLIYSLLSFI. Residues 89-96 are Extracellular-facing; that stretch reads SIPHTISK. Residues 97–117 form a helical membrane-spanning segment; sequence ILYPVMMFSYFAGLSFLSAVS. The Cytoplasmic segment spans residues 118 to 144; the sequence is TERCLSVLWPIWYRCHRPTHLSAVVCV. A helical transmembrane segment spans residues 145-165; the sequence is LLWALSLLRSILEWMLCGFLF. Residues 166–177 lie on the Extracellular side of the membrane; it reads SGADSAWCQTSD. The helical transmembrane segment at 178–198 threads the bilayer; the sequence is FITVAWLIFLCVVLCGSSLVL. At 199–221 the chain is on the cytoplasmic side; the sequence is LIRILCGSRKIPLTRLYVTILLT. Residues 222–242 form a helical membrane-spanning segment; the sequence is VLVFLLCGLPFGIQFFLFLWI. Over 243 to 254 the chain is Extracellular; the sequence is HVDREVLFCHVH. A helical membrane pass occupies residues 255–275; sequence LVSIFLSALNSSANPIIYFFV. Topologically, residues 276-322 are cytoplasmic; sequence GSFRQRQNRQNLKLVLQRALQDASEVDEGGGQLPEEILELSGSRLEQ.

This sequence belongs to the G-protein coupled receptor 1 family. Mas subfamily. In terms of tissue distribution, uniquely localized in a subset of small dorsal root and trigeminal sensory neurons.

Its subcellular location is the cell membrane. In terms of biological role, orphan receptor. Probably involved in the function of nociceptive neurons. May regulate nociceptor function and/or development, including the sensation or modulation of pain. Potently activated by enkephalins including BAM22 (bovine adrenal medulla peptide 22) and BAM (8-22). BAM22 is the most potent compound and evoked a large and dose-dependent release of intracellular calcium in stably transfected cells. G(alpha)q proteins are involved in the calcium-signaling pathway. Activated by the antimalarial drug, chloroquine. May mediate chloroquine-induced itch, in a histamine-independent manner. In Homo sapiens (Human), this protein is Mas-related G-protein coupled receptor member X1 (MRGPRX1).